A 476-amino-acid polypeptide reads, in one-letter code: Adenosylhomocysteinase (476 aa).

Residues Thr65, Asp140, and Glu201 each coordinate substrate. 202–204 (TTT) contacts NAD(+). Substrate contacts are provided by Lys231 and Asp235. NAD(+)-binding positions include Asn236, 265 to 270 (GYGDVG), Glu288, Asn323, 344 to 346 (IGH), and Asn392.

The protein belongs to the adenosylhomocysteinase family. It depends on NAD(+) as a cofactor.

The protein resides in the cytoplasm. The catalysed reaction is S-adenosyl-L-homocysteine + H2O = L-homocysteine + adenosine. It functions in the pathway amino-acid biosynthesis; L-homocysteine biosynthesis; L-homocysteine from S-adenosyl-L-homocysteine: step 1/1. In terms of biological role, may play a key role in the regulation of the intracellular concentration of adenosylhomocysteine. The sequence is that of Adenosylhomocysteinase from Bacteroides thetaiotaomicron (strain ATCC 29148 / DSM 2079 / JCM 5827 / CCUG 10774 / NCTC 10582 / VPI-5482 / E50).